Consider the following 1241-residue polypeptide: Anion exchange protein 2 (1241 aa).

The interval 1–240 (MSSAPRRPAK…RSYNLQERRR (240 aa)) is disordered. Residues 1 to 707 (MSSAPRRPAK…SDFRDALDPQ (707 aa)) lie on the Cytoplasmic side of the membrane. Composition is skewed to basic and acidic residues over residues 37–49 (ELHR…RFEE) and 58–75 (GGEE…EYHR). 2 stretches are compositionally biased toward basic residues: residues 76-85 (QSSHHIHHPL) and 94-110 (RRRK…RRRP). Phosphoserine is present on residues Ser113, Ser132, Ser144, Ser170, Ser172, and Ser173. Positions 120 to 133 (TIEEGEEDEDEASE) are enriched in acidic residues. Residues 141–155 (TQPSPVSTPSSVQFF) show a composition bias toward low complexity. Thr183 is subject to Phosphothreonine. Low complexity predominate over residues 189 to 209 (GAQAGTQVEEAEAEAVAVASG). Gly residues predominate over residues 210–219 (TAGGDDGGAS). Ser243 is subject to Phosphoserine. Thr257 carries the phosphothreonine modification. Lys274 bears the N6-methyllysine mark. A disordered region spans residues 288–320 (LVRKNAKGSTQSGREGREPGPTPRARPRAPHKP). Ser443 carries the phosphoserine modification. The tract at residues 449–471 (SLLGHHHGQGAESDPHVTEPLMG) is disordered. The next 4 membrane-spanning stretches (helical) occupy residues 708-731 (CLAA…GLLG), 737-774 (LIGV…LLVF), 784-816 (SNHL…SFLV), and 826-847 (IFAF…VKIF). Positions 708 to 1241 (CLAAVIFIYF…DEYNEMPMPV (534 aa)) are membrane (anion exchange). Residues 848-900 (QEHPLHGCSASNSSEVDGGENMTWAGARPTLGPGNRSLAGQSGQGKPRGQPNT) lie on the Extracellular side of the membrane. N-linked (GlcNAc...) asparagine glycosylation is found at Asn859, Asn868, and Asn882. Residues 901-918 (ALLSLVLMAGTFFIAFFL) traverse the membrane as a helical segment. The Cytoplasmic segment spans residues 919–933 (RKFKNSRFFPGRIRR). Helical transmembrane passes span 934–954 (VIGD…DYSI), 988–1010 (PFPV…LIFM), 1036–1059 (LLLI…AATV), 1091–1136 (VTGL…IQFY), and 1163–1199 (MHLF…TVPL). Cys1173 is lipidated: S-palmitoyl cysteine.

Belongs to the anion exchanger (TC 2.A.31) family. Expressed in the liver, stomach, kidney, prostate, thyroid and rectum. As to expression, expressed in the liver and kidney.

It localises to the apical cell membrane. It is found in the basolateral cell membrane. It catalyses the reaction hydrogencarbonate(in) + chloride(out) = hydrogencarbonate(out) + chloride(in). Sodium-independent anion exchanger which mediates the electroneutral exchange of chloride for bicarbonate ions across the cell membrane. Plays an important role in osteoclast differentiation and function. Regulates bone resorption and calpain-dependent actin cytoskeleton organization in osteoclasts via anion exchange-dependent control of pH. Essential for intracellular pH regulation in CD8(+) T-cells upon CD3 stimulation, modulating CD8(+) T-cell responses. In Homo sapiens (Human), this protein is Anion exchange protein 2 (SLC4A2).